A 605-amino-acid chain; its full sequence is UvrABC system protein C (605 aa).

Residues 13-92 (TSPGVYLMKD…IKKHHPKYNV (80 aa)) form the GIY-YIG domain. One can recognise a UVR domain in the interval 205–240 (SEIIQDLEKSIEKASQEQKFEQAGIYYRTLKLIQQA).

Belongs to the UvrC family. Interacts with UvrB in an incision complex.

Its subcellular location is the cytoplasm. The UvrABC repair system catalyzes the recognition and processing of DNA lesions. UvrC both incises the 5' and 3' sides of the lesion. The N-terminal half is responsible for the 3' incision and the C-terminal half is responsible for the 5' incision. The polypeptide is UvrABC system protein C (Chlamydia caviae (strain ATCC VR-813 / DSM 19441 / 03DC25 / GPIC) (Chlamydophila caviae)).